We begin with the raw amino-acid sequence, 421 residues long: Gamma-glutamyl phosphate reductase (421 aa).

Belongs to the gamma-glutamyl phosphate reductase family.

It localises to the cytoplasm. The enzyme catalyses L-glutamate 5-semialdehyde + phosphate + NADP(+) = L-glutamyl 5-phosphate + NADPH + H(+). Its pathway is amino-acid biosynthesis; L-proline biosynthesis; L-glutamate 5-semialdehyde from L-glutamate: step 2/2. Its function is as follows. Catalyzes the NADPH-dependent reduction of L-glutamate 5-phosphate into L-glutamate 5-semialdehyde and phosphate. The product spontaneously undergoes cyclization to form 1-pyrroline-5-carboxylate. In Stutzerimonas stutzeri (strain A1501) (Pseudomonas stutzeri), this protein is Gamma-glutamyl phosphate reductase.